A 130-amino-acid chain; its full sequence is MATTSKKTGSKKSKRNVPNGVVHIQSTFNNTIVSITDTSGEVISWSSAGASGFKGARKGTPFAAQTAAELAARRALEQGMRQIEVLVRGPGSGRETAIRALQVAGLEITLIRDVTPLPHNGCRRPKRRRV.

It belongs to the universal ribosomal protein uS11 family. In terms of assembly, part of the 30S ribosomal subunit. Interacts with proteins S7 and S18. Binds to IF-3.

Located on the platform of the 30S subunit, it bridges several disparate RNA helices of the 16S rRNA. Forms part of the Shine-Dalgarno cleft in the 70S ribosome. This chain is Small ribosomal subunit protein uS11, found in Prochlorococcus marinus (strain NATL1A).